A 346-amino-acid polypeptide reads, in one-letter code: Phosphate acyltransferase (346 aa).

The protein belongs to the PlsX family. In terms of assembly, homodimer. Probably interacts with PlsY.

It localises to the cytoplasm. The enzyme catalyses a fatty acyl-[ACP] + phosphate = an acyl phosphate + holo-[ACP]. The protein operates within lipid metabolism; phospholipid metabolism. Catalyzes the reversible formation of acyl-phosphate (acyl-PO(4)) from acyl-[acyl-carrier-protein] (acyl-ACP). This enzyme utilizes acyl-ACP as fatty acyl donor, but not acyl-CoA. This is Phosphate acyltransferase from Synechococcus elongatus (strain ATCC 33912 / PCC 7942 / FACHB-805) (Anacystis nidulans R2).